Reading from the N-terminus, the 549-residue chain is Oxygen-dependent choline dehydrogenase (549 aa).

FAD is bound at residue 4-33 (DYVIVGSGSAGSAIAYRLSEDGRYSVIVIE). His465 functions as the Proton acceptor in the catalytic mechanism. The interval 528-549 (KTPLPRSNQEPWVNPRAAVSDR) is disordered.

This sequence belongs to the GMC oxidoreductase family. Requires FAD as cofactor.

The enzyme catalyses choline + A = betaine aldehyde + AH2. The catalysed reaction is betaine aldehyde + NAD(+) + H2O = glycine betaine + NADH + 2 H(+). It functions in the pathway amine and polyamine biosynthesis; betaine biosynthesis via choline pathway; betaine aldehyde from choline (cytochrome c reductase route): step 1/1. Functionally, involved in the biosynthesis of the osmoprotectant glycine betaine. Catalyzes the oxidation of choline to betaine aldehyde and betaine aldehyde to glycine betaine at the same rate. This Agrobacterium fabrum (strain C58 / ATCC 33970) (Agrobacterium tumefaciens (strain C58)) protein is Oxygen-dependent choline dehydrogenase.